Here is a 745-residue protein sequence, read N- to C-terminus: uncharacterized protein (745 aa).

The 99-residue stretch at 158-256 (NQVCDYIELH…HQTPKQYRGD (99 aa)) folds into the HTH araC/xylS-type domain. 2 consecutive DNA-binding regions (H-T-H motif) follow at residues 175–196 (SELS…AESL) and 223–246 (ITDI…KHIT).

This is an uncharacterized protein from Staphylococcus aureus.